Reading from the N-terminus, the 351-residue chain is Putative [LysW]-L-2-aminoadipate/[LysW]-L-glutamate phosphate reductase (351 aa).

Residues 9-12 (SGFV) and 33-35 (SRR) each bind NADP(+). Residue C150 is part of the active site. N318 contributes to the NADP(+) binding site.

It belongs to the NAGSA dehydrogenase family. Type 1 subfamily. LysY sub-subfamily.

The protein localises to the cytoplasm. The enzyme catalyses [amino-group carrier protein]-C-terminal-N-(1-carboxy-5-oxopentan-1-yl)-L-glutamine + phosphate + NADP(+) = [amino-group carrier protein]-C-terminal-N-(1-carboxy-5-phosphooxy-5-oxopentan-1-yl)-L-glutamine + NADPH + H(+). It carries out the reaction [amino-group carrier protein]-C-terminal-gamma-(L-glutamyl-5-semialdehyde)-L-glutamate + phosphate + NADP(+) = [amino-group carrier protein]-C-terminal-gamma-(5-phospho-L-glutamyl)-L-glutamate + NADPH + H(+). It participates in amino-acid biosynthesis; L-lysine biosynthesis via AAA pathway; L-lysine from L-alpha-aminoadipate (Thermus route): step 3/5. Its pathway is amino-acid biosynthesis; L-arginine biosynthesis. Involved in both the arginine and lysine biosynthetic pathways. The sequence is that of Putative [LysW]-L-2-aminoadipate/[LysW]-L-glutamate phosphate reductase from Pyrobaculum aerophilum (strain ATCC 51768 / DSM 7523 / JCM 9630 / CIP 104966 / NBRC 100827 / IM2).